The chain runs to 74 residues: Large ribosomal subunit protein bL31 (74 aa).

This sequence belongs to the bacterial ribosomal protein bL31 family. Type A subfamily. Part of the 50S ribosomal subunit.

Functionally, binds the 23S rRNA. This chain is Large ribosomal subunit protein bL31, found in Phenylobacterium zucineum (strain HLK1).